We begin with the raw amino-acid sequence, 562 residues long: Protein FAM83D-A (562 aa).

The disordered stretch occupies residues 424-471 (ITTQTTETSQCTTQTPAPTSSVARLSNSSNSSSSSFSSTSITSTGSNC). Residues 425–471 (TTQTTETSQCTTQTPAPTSSVARLSNSSNSSSSSFSSTSITSTGSNC) show a composition bias toward low complexity.

It belongs to the FAM83 family.

It localises to the cytoplasm. The protein localises to the cytoskeleton. The protein resides in the spindle. Its subcellular location is the spindle pole. Functionally, may regulate cell proliferation, growth, migration and epithelial to mesenchymal transition. May also be important for proper chromosome congression and alignment during mitosis. The chain is Protein FAM83D-A from Xenopus laevis (African clawed frog).